Consider the following 404-residue polypeptide: Sorting nexin-32 (404 aa).

Basic and acidic residues predominate over residues 1–10 (MEEQHQEAGN). The tract at residues 1-29 (MEEQHQEAGNESKPSSTSVDLQGDSPLQV) is disordered. Residues 11–20 (ESKPSSTSVD) show a composition bias toward polar residues. Residues 21–168 (LQGDSPLQVE…SVFLEYSQDL (148 aa)) form the PX domain. Residues 255 to 336 (TQEVNQLKRS…KARTRNREVR (82 aa)) adopt a coiled-coil conformation.

It belongs to the sorting nexin family.

In terms of biological role, may be involved in several stages of intracellular trafficking. In Mus musculus (Mouse), this protein is Sorting nexin-32 (Snx32).